Consider the following 546-residue polypeptide: Thermolysin (546 aa).

Residues 1–25 (MDKRAMLGAIGLAFGLMAWPFGASA) form the signal peptide. Residues 26–228 (KEKSMVWNEQ…EAKPGGGQPV (203 aa)) constitute a propeptide, activation peptide. 4 residues coordinate Ca(2+): D287, D289, Q291, and D368. H372 is a binding site for Zn(2+). E373 is an active-site residue. Residues H376 and E396 each coordinate Zn(2+). 8 residues coordinate Ca(2+): N413, D415, E417, E420, Y423, T424, I427, and D430. H461 (proton donor) is an active-site residue.

The protein belongs to the peptidase M4 family. Requires Ca(2+) as cofactor. Zn(2+) is required as a cofactor.

Its subcellular location is the secreted. It catalyses the reaction Preferential cleavage: Xaa-|-Leu &gt; Xaa-|-Phe.. Its function is as follows. Extracellular zinc metalloprotease. Has collagenase activity. The sequence is that of Thermolysin (npr) from Bacillus sp. (strain EA1).